Consider the following 264-residue polypeptide: Thymidylate synthase (264 aa).

R21 serves as a coordination point for dUMP. Residue H51 participates in (6R)-5,10-methylene-5,6,7,8-tetrahydrofolate binding. Residue 126–127 (RR) coordinates dUMP. The Nucleophile role is filled by C146. Residues 166-169 (RSCD), N177, and 207-209 (HLY) each bind dUMP. D169 contacts (6R)-5,10-methylene-5,6,7,8-tetrahydrofolate. A263 is a binding site for (6R)-5,10-methylene-5,6,7,8-tetrahydrofolate.

Belongs to the thymidylate synthase family. Bacterial-type ThyA subfamily. In terms of assembly, homodimer.

The protein localises to the cytoplasm. It carries out the reaction dUMP + (6R)-5,10-methylene-5,6,7,8-tetrahydrofolate = 7,8-dihydrofolate + dTMP. It functions in the pathway pyrimidine metabolism; dTTP biosynthesis. Functionally, catalyzes the reductive methylation of 2'-deoxyuridine-5'-monophosphate (dUMP) to 2'-deoxythymidine-5'-monophosphate (dTMP) while utilizing 5,10-methylenetetrahydrofolate (mTHF) as the methyl donor and reductant in the reaction, yielding dihydrofolate (DHF) as a by-product. This enzymatic reaction provides an intracellular de novo source of dTMP, an essential precursor for DNA biosynthesis. This Buchnera aphidicola subsp. Baizongia pistaciae (strain Bp) protein is Thymidylate synthase.